Consider the following 88-residue polypeptide: uncharacterized protein (88 aa).

This is an uncharacterized protein from Homo sapiens (Human).